The sequence spans 41 residues: Large ribosomal subunit protein bL36 (41 aa).

It belongs to the bacterial ribosomal protein bL36 family.

This chain is Large ribosomal subunit protein bL36, found in Hyphomonas neptunium (strain ATCC 15444).